The following is a 316-amino-acid chain: Ribosomal RNA small subunit methyltransferase H (316 aa).

Residues 35–37 (SGH), Asp55, Phe84, Asp105, and Gln112 contribute to the S-adenosyl-L-methionine site.

It belongs to the methyltransferase superfamily. RsmH family.

It is found in the cytoplasm. It catalyses the reaction cytidine(1402) in 16S rRNA + S-adenosyl-L-methionine = N(4)-methylcytidine(1402) in 16S rRNA + S-adenosyl-L-homocysteine + H(+). In terms of biological role, specifically methylates the N4 position of cytidine in position 1402 (C1402) of 16S rRNA. This Streptococcus pyogenes serotype M49 (strain NZ131) protein is Ribosomal RNA small subunit methyltransferase H.